The chain runs to 465 residues: Cysteine--tRNA ligase (465 aa).

Position 28 (Cys-28) interacts with Zn(2+). A 'HIGH' region motif is present at residues Pro-30–Asn-40. 3 residues coordinate Zn(2+): Cys-208, His-233, and Glu-237. Positions Lys-265 to Ser-269 match the 'KMSKS' region motif. Lys-268 lines the ATP pocket.

This sequence belongs to the class-I aminoacyl-tRNA synthetase family. As to quaternary structure, monomer. Zn(2+) is required as a cofactor.

Its subcellular location is the cytoplasm. It catalyses the reaction tRNA(Cys) + L-cysteine + ATP = L-cysteinyl-tRNA(Cys) + AMP + diphosphate. The polypeptide is Cysteine--tRNA ligase (Exiguobacterium sibiricum (strain DSM 17290 / CCUG 55495 / CIP 109462 / JCM 13490 / 255-15)).